The primary structure comprises 513 residues: cAMP-regulated M3R protein (513 aa).

This sequence to D.discoideum protein M3L.

This Dictyostelium discoideum (Social amoeba) protein is cAMP-regulated M3R protein (prtB).